The chain runs to 60 residues: Small ribosomal subunit protein bS21 (60 aa).

Positions 38 to 60 (KGVKRREKEKAARKRLQKKHRMY) are disordered.

The protein belongs to the bacterial ribosomal protein bS21 family.

The sequence is that of Small ribosomal subunit protein bS21 from Mycoplasmoides gallisepticum (strain R(low / passage 15 / clone 2)) (Mycoplasma gallisepticum).